The sequence spans 192 residues: Thymidine kinase (192 aa).

Residues 9–16 (SAMNAGKS) and 87–90 (DECQ) contribute to the ATP site. The active-site Proton acceptor is glutamate 88. 4 residues coordinate Zn(2+): cysteine 145, cysteine 147, cysteine 182, and histidine 185.

It belongs to the thymidine kinase family. Homotetramer.

It localises to the cytoplasm. The catalysed reaction is thymidine + ATP = dTMP + ADP + H(+). This chain is Thymidine kinase, found in Photobacterium profundum (strain SS9).